The chain runs to 158 residues: UPF0735 ACT domain-containing protein Bsph_3944 (158 aa).

The ACT domain maps to 80–155 (TVFLQLQDRK…FVESAEVISS (76 aa)).

This sequence belongs to the UPF0735 family.

The chain is UPF0735 ACT domain-containing protein Bsph_3944 from Lysinibacillus sphaericus (strain C3-41).